A 266-amino-acid polypeptide reads, in one-letter code: Glucosamine-6-phosphate deaminase (266 aa).

Catalysis depends on Asp72, which acts as the Proton acceptor; for enolization step. Asp141 (for ring-opening step) is an active-site residue. His143 serves as the catalytic Proton acceptor; for ring-opening step. Residue Glu148 is the For ring-opening step of the active site.

Belongs to the glucosamine/galactosamine-6-phosphate isomerase family. NagB subfamily. As to quaternary structure, homohexamer.

It carries out the reaction alpha-D-glucosamine 6-phosphate + H2O = beta-D-fructose 6-phosphate + NH4(+). It participates in amino-sugar metabolism; N-acetylneuraminate degradation; D-fructose 6-phosphate from N-acetylneuraminate: step 5/5. Its activity is regulated as follows. Allosterically activated by N-acetylglucosamine 6-phosphate (GlcNAc6P). In terms of biological role, catalyzes the reversible isomerization-deamination of glucosamine 6-phosphate (GlcN6P) to form fructose 6-phosphate (Fru6P) and ammonium ion. The sequence is that of Glucosamine-6-phosphate deaminase from Pectobacterium atrosepticum (strain SCRI 1043 / ATCC BAA-672) (Erwinia carotovora subsp. atroseptica).